The primary structure comprises 126 residues: MEIGVDIVELERIRNAWNRYGLAFLNRFLTAGEIVYCLEKKDPAASIAGRFAAKEALVKAMGTGISGKVRWQSFEILNDAKGKPVVHITGTDLSSLVRSARVSISHDRHSAIAMAIISLEPVAGSR.

Asp-6 and Glu-55 together coordinate Mg(2+).

Belongs to the P-Pant transferase superfamily. AcpS family. Mg(2+) is required as a cofactor.

The protein resides in the cytoplasm. It catalyses the reaction apo-[ACP] + CoA = holo-[ACP] + adenosine 3',5'-bisphosphate + H(+). Functionally, transfers the 4'-phosphopantetheine moiety from coenzyme A to a Ser of acyl-carrier-protein. In Chlorobium limicola (strain DSM 245 / NBRC 103803 / 6330), this protein is Holo-[acyl-carrier-protein] synthase.